The sequence spans 402 residues: UDP-glucose 6-dehydrogenase (402 aa).

NAD(+) contacts are provided by residues 2 to 19 (KIAV…GVLL), valine 11, aspartate 29, lysine 34, threonine 83, threonine 118, and glutamate 145. Substrate is bound by residues 141 to 145 (EFLRE), lysine 204, asparagine 208, 249 to 253 (YNNPS), and glycine 257. NAD(+) is bound at residue tyrosine 259. The active-site Nucleophile is cysteine 260. Lysine 263 contacts NAD(+). Position 320 (lysine 320) interacts with substrate. An NAD(+)-binding site is contributed by arginine 327.

This sequence belongs to the UDP-glucose/GDP-mannose dehydrogenase family.

The catalysed reaction is UDP-alpha-D-glucose + 2 NAD(+) + H2O = UDP-alpha-D-glucuronate + 2 NADH + 3 H(+). The protein operates within nucleotide-sugar biosynthesis; UDP-alpha-D-glucuronate biosynthesis; UDP-alpha-D-glucuronate from UDP-alpha-D-glucose: step 1/1. Functionally, catalyzes the formation of UDP-glucuronic acid which is required for capsular hyaluronic acid synthesis. In Streptococcus pyogenes serotype M1, this protein is UDP-glucose 6-dehydrogenase (hasB).